Here is a 500-residue protein sequence, read N- to C-terminus: L-arabinose isomerase (500 aa).

4 residues coordinate Mn(2+): Glu306, Glu333, His349, and His448.

This sequence belongs to the arabinose isomerase family. Requires Mn(2+) as cofactor.

The catalysed reaction is beta-L-arabinopyranose = L-ribulose. It functions in the pathway carbohydrate degradation; L-arabinose degradation via L-ribulose; D-xylulose 5-phosphate from L-arabinose (bacterial route): step 1/3. Its function is as follows. Catalyzes the conversion of L-arabinose to L-ribulose. This is L-arabinose isomerase from Saccharophagus degradans (strain 2-40 / ATCC 43961 / DSM 17024).